We begin with the raw amino-acid sequence, 316 residues long: Beta-ketoacyl-[acyl-carrier-protein] synthase III 4 (316 aa).

Catalysis depends on residues Cys114 and His242. Residues 243–247 (QANLR) form an ACP-binding region. Asn272 is an active-site residue.

It belongs to the thiolase-like superfamily. FabH family. Homodimer.

Its subcellular location is the cytoplasm. The enzyme catalyses malonyl-[ACP] + acetyl-CoA + H(+) = 3-oxobutanoyl-[ACP] + CO2 + CoA. It participates in lipid metabolism; fatty acid biosynthesis. Catalyzes the condensation reaction of fatty acid synthesis by the addition to an acyl acceptor of two carbons from malonyl-ACP. Catalyzes the first condensation reaction which initiates fatty acid synthesis and may therefore play a role in governing the total rate of fatty acid production. Possesses both acetoacetyl-ACP synthase and acetyl transacylase activities. Its substrate specificity determines the biosynthesis of branched-chain and/or straight-chain of fatty acids. This chain is Beta-ketoacyl-[acyl-carrier-protein] synthase III 4, found in Streptomyces coelicolor (strain ATCC BAA-471 / A3(2) / M145).